Reading from the N-terminus, the 176-residue chain is uncharacterized protein (176 aa).

This is an uncharacterized protein from Aquifex aeolicus (strain VF5).